Here is a 123-residue protein sequence, read N- to C-terminus: Small ribosomal subunit protein uS12 (123 aa).

Residue aspartate 89 is modified to 3-methylthioaspartic acid. The tract at residues 100–123 (GSLDTSGVSDRKQGRSKYGTKRPK) is disordered. The span at 113 to 123 (GRSKYGTKRPK) shows a compositional bias: basic residues.

The protein belongs to the universal ribosomal protein uS12 family. In terms of assembly, part of the 30S ribosomal subunit. Contacts proteins S8 and S17. May interact with IF1 in the 30S initiation complex.

Functionally, with S4 and S5 plays an important role in translational accuracy. Its function is as follows. Interacts with and stabilizes bases of the 16S rRNA that are involved in tRNA selection in the A site and with the mRNA backbone. Located at the interface of the 30S and 50S subunits, it traverses the body of the 30S subunit contacting proteins on the other side and probably holding the rRNA structure together. The combined cluster of proteins S8, S12 and S17 appears to hold together the shoulder and platform of the 30S subunit. The protein is Small ribosomal subunit protein uS12 of Saccharophagus degradans (strain 2-40 / ATCC 43961 / DSM 17024).